The primary structure comprises 163 residues: Antimicrobial peptide 2 (163 aa).

A signal peptide spans 1–22 (MLNMKSFALLMLFATLVGVTIA). Chitin-binding type-1 domains lie at 26 to 66 (NGKC…EIEP) and 69 to 107 (AGQC…SCLP). 3 disulfides stabilise this stretch: C29–C42, C36–C48, and C41–C55. Residues 58–67 (NTPLSEIEPT) constitute a propeptide that is removed on maturation. 4 cysteine pairs are disulfide-bonded: C72-C83, C77-C89, C82-C96, and C101-C105. Positions 100-163 (MCQGSCLPDM…QVEPAVTKAP (64 aa)) are excised as a propeptide.

As to expression, expressed in roots, flowers, stem and leaves.

Functionally, antimicrobial peptide. The chain is Antimicrobial peptide 2 from Stellaria media (Common chickweed).